A 787-amino-acid polypeptide reads, in one-letter code: Endonuclease MutS2 (787 aa).

ATP is bound at residue 335-342 (GPNTGGKT). A Smr domain is found at 712 to 787 (LDLRGERYED…GLGNTVIELK (76 aa)).

This sequence belongs to the DNA mismatch repair MutS family. MutS2 subfamily. In terms of assembly, homodimer. Binds to stalled ribosomes, contacting rRNA.

In terms of biological role, endonuclease that is involved in the suppression of homologous recombination and thus may have a key role in the control of bacterial genetic diversity. Its function is as follows. Acts as a ribosome collision sensor, splitting the ribosome into its 2 subunits. Detects stalled/collided 70S ribosomes which it binds and splits by an ATP-hydrolysis driven conformational change. Acts upstream of the ribosome quality control system (RQC), a ribosome-associated complex that mediates the extraction of incompletely synthesized nascent chains from stalled ribosomes and their subsequent degradation. Probably generates substrates for RQC. This chain is Endonuclease MutS2, found in Shouchella clausii (strain KSM-K16) (Alkalihalobacillus clausii).